Reading from the N-terminus, the 152-residue chain is Superoxide dismutase [Cu-Zn] (152 aa).

Residues His-45, His-47, and His-62 each coordinate Cu cation. Residues Cys-56 and Cys-145 are joined by a disulfide bond. Zn(2+) contacts are provided by His-62, His-70, His-79, and Asp-82. His-119 provides a ligand contact to Cu cation.

This sequence belongs to the Cu-Zn superoxide dismutase family. As to quaternary structure, homodimer. It depends on Cu cation as a cofactor. Zn(2+) is required as a cofactor.

It is found in the cytoplasm. It catalyses the reaction 2 superoxide + 2 H(+) = H2O2 + O2. Destroys radicals which are normally produced within the cells and which are toxic to biological systems. The polypeptide is Superoxide dismutase [Cu-Zn] (SODCC) (Ipomoea batatas (Sweet potato)).